Here is a 683-residue protein sequence, read N- to C-terminus: E3 ubiquitin-protein ligase WAVH1 (683 aa).

The RING-type; atypical zinc-finger motif lies at 130 to 176; that stretch reads CGICLQSVKSGQGTAIFTAECSHTFHFPCVTSRAAANHNRLASCPVC. Residues 302–438 form the VWFA domain; sequence DLVAVLDVSG…AHSRIPIHTI (137 aa).

In terms of tissue distribution, expressed in root tips and leaf primordia.

The enzyme catalyses S-ubiquitinyl-[E2 ubiquitin-conjugating enzyme]-L-cysteine + [acceptor protein]-L-lysine = [E2 ubiquitin-conjugating enzyme]-L-cysteine + N(6)-ubiquitinyl-[acceptor protein]-L-lysine.. Its function is as follows. E3 ubiquitin-protein ligase involved in the regulation of root growth. Acts as a positive regulator of root gravitropism. Possesses E3 protein ligase activity in vitro. This is E3 ubiquitin-protein ligase WAVH1 from Arabidopsis thaliana (Mouse-ear cress).